A 759-amino-acid polypeptide reads, in one-letter code: NADP-dependent malic enzyme (759 aa).

The malic enzyme stretch occupies residues 1-428; sequence MDDQLKQSAL…KLTEFVYKTN (428 aa). Residue tyrosine 39 is the Proton donor of the active site. Position 56 is an N6-acetyllysine (lysine 56). Lysine 94 (proton acceptor) is an active-site residue. Residues glutamate 136, aspartate 137, and aspartate 162 each coordinate a divalent metal cation. NADP(+) is bound by residues 195–198, asparagine 288, and asparagine 320; that span reads AGAA. Residues 429–759 form a phosphate acetyltransferase; required for oligomerization, inhibition by acetyl-CoA and activation by glutamate, aspartate, and glucose-6-phosphate region; sequence LFMKPIFSQA…AVVEAQTQPL (331 aa).

It in the N-terminal section; belongs to the malic enzymes family. The protein in the C-terminal section; belongs to the phosphate acetyltransferase and butyryltransferase family. Homooligomer, possibly an octamer. It depends on Mg(2+) as a cofactor. Requires Mn(2+) as cofactor.

It catalyses the reaction (S)-malate + NADP(+) = pyruvate + CO2 + NADPH. It carries out the reaction oxaloacetate + H(+) = pyruvate + CO2. Its activity is regulated as follows. Inhibited by 4 mM Mg(2+) and acetyl-CoA, competitively inhibited by fumarate and oxaloacetate. Activated by glutamate and aspartate, glucose-6-phosphate, acetyl-phosphate and 2 mM KCl. Catalyzes the decarboxylation of malate to pyruvate. In vitro, shows malolactic enzyme activity in the presence of NADPH. However, it is unlikely that this activity is of relevance in E.coli, which produces little NADPH. The chain is NADP-dependent malic enzyme (maeB) from Escherichia coli (strain K12).